The following is a 245-amino-acid chain: tRNA1(Val) (adenine(37)-N6)-methyltransferase (245 aa).

It belongs to the methyltransferase superfamily. tRNA (adenine-N(6)-)-methyltransferase family.

The protein resides in the cytoplasm. The catalysed reaction is adenosine(37) in tRNA1(Val) + S-adenosyl-L-methionine = N(6)-methyladenosine(37) in tRNA1(Val) + S-adenosyl-L-homocysteine + H(+). Its function is as follows. Specifically methylates the adenine in position 37 of tRNA(1)(Val) (anticodon cmo5UAC). The chain is tRNA1(Val) (adenine(37)-N6)-methyltransferase from Escherichia coli (strain SE11).